The primary structure comprises 370 residues: Dual-specificity RNA methyltransferase RlmN (370 aa).

Glu93 acts as the Proton acceptor in catalysis. A Radical SAM core domain is found at 99 to 331 (DRKRGTLCVS…TRVRRTRGDD (233 aa)). A disulfide bond links Cys106 and Cys336. [4Fe-4S] cluster contacts are provided by Cys113, Cys117, and Cys120. Residues 162-163 (GE), Ser194, 216-218 (SLH), and Asn293 each bind S-adenosyl-L-methionine. The active-site S-methylcysteine intermediate is Cys336.

Belongs to the radical SAM superfamily. RlmN family. Requires [4Fe-4S] cluster as cofactor.

Its subcellular location is the cytoplasm. It carries out the reaction adenosine(2503) in 23S rRNA + 2 reduced [2Fe-2S]-[ferredoxin] + 2 S-adenosyl-L-methionine = 2-methyladenosine(2503) in 23S rRNA + 5'-deoxyadenosine + L-methionine + 2 oxidized [2Fe-2S]-[ferredoxin] + S-adenosyl-L-homocysteine. It catalyses the reaction adenosine(37) in tRNA + 2 reduced [2Fe-2S]-[ferredoxin] + 2 S-adenosyl-L-methionine = 2-methyladenosine(37) in tRNA + 5'-deoxyadenosine + L-methionine + 2 oxidized [2Fe-2S]-[ferredoxin] + S-adenosyl-L-homocysteine. Its function is as follows. Specifically methylates position 2 of adenine 2503 in 23S rRNA and position 2 of adenine 37 in tRNAs. m2A2503 modification seems to play a crucial role in the proofreading step occurring at the peptidyl transferase center and thus would serve to optimize ribosomal fidelity. The sequence is that of Dual-specificity RNA methyltransferase RlmN from Coxiella burnetii (strain RSA 493 / Nine Mile phase I).